A 971-amino-acid polypeptide reads, in one-letter code: Valine--tRNA ligase (971 aa).

Positions 55–65 match the 'HIGH' region motif; sequence PNVTGSLHMGH. The 'KMSKS' region motif lies at 572–576; it reads KMSKS. An ATP-binding site is contributed by Lys-575. Positions 906-933 form a coiled coil; sequence KAELGRLQKDLDKVQKQHDQIASKLANE.

Belongs to the class-I aminoacyl-tRNA synthetase family. ValS type 1 subfamily. As to quaternary structure, monomer.

The protein localises to the cytoplasm. The catalysed reaction is tRNA(Val) + L-valine + ATP = L-valyl-tRNA(Val) + AMP + diphosphate. In terms of biological role, catalyzes the attachment of valine to tRNA(Val). As ValRS can inadvertently accommodate and process structurally similar amino acids such as threonine, to avoid such errors, it has a 'posttransfer' editing activity that hydrolyzes mischarged Thr-tRNA(Val) in a tRNA-dependent manner. This is Valine--tRNA ligase from Acinetobacter baylyi (strain ATCC 33305 / BD413 / ADP1).